The chain runs to 406 residues: Plasma serine protease inhibitor (406 aa).

A signal peptide spans 1–19 (MQLFLLLCLVLLSPQGASL). Residues 20–25 (HRHHPR) constitute a propeptide, removed in mature form. The O-linked (GalNAc...) threonine glycan is linked to Thr-39. N-linked (GlcNAc...) asparagine glycans are attached at residues Asn-249, Asn-262, and Asn-338.

The protein belongs to the serpin family. In terms of assembly, forms protease inhibiting heterodimers in extracellular body fluids with serine proteases such as activated protein C/coagulation factor V/F5, acrosin/ACR, chymotrypsinogen B/CTRB1, prothrombin/F2, factor Xa/F10, factor XI/F11, kallikrein/KLKB1, tissue kallikrein, trypsin/PRSS1, prostate specific antigen/KLK3, tissue plasminogen activator/PLAT and urinary plasminogen activator/PLAU. Forms membrane-anchored serine proteases inhibiting heterodimers with TMPRSS7 and TMPRSS11E. Interacts with SEMG2. N- and O-glycosylated. N-glycosylation consists of a mixture of sialylated bi- (including sialyl-Lewis X epitopes), tri- and tetra-antennary complex-type chains; affects the maximal heparin- and thrombomodulin-enhanced rates of thrombin inhibition. O-glycosylated with core 1 or possibly core 8 glycans. Further modified with 2 sialic acid residues. Post-translationally, proteolytically cleaved. Inhibition of proteases is accompanied by formation of a stable enzyme-inhibitor complex and by degradation of the serpin to lower molecular weight derivatives. Proteolytically cleaved at the N-terminus; inhibits slightly the heparin- and thrombomodulin-enhanced rates of thrombin inhibition. As to expression, predominantly expressed in the epithelium of seminal vesicles. Expressed in the proximal tubular epithelium of the kidney. Expressed in the superficial and more differentiated epidermal keratinocytes of the skin. Expressed in megakaryocytes and platelets. Expressed poorly in kidney tumor cells compared to non tumor kidney tissues. Expressed in spermatozoa. Present in very high concentration in seminal plasma. Present in high concentration in plasma, synovial and Graaf follicle fluids. Present in low concentration in breast milk and in amniotic fluids. Present in very low concentration in urine, cerebrospinal fluids, saliva and tears (at protein level). Strongly expressed in liver. Expressed in kidney, spleen, pancreas, skeletal muscle, heart, testes, ovary, interstitial Leydig cells, epididymal glands, seminal vesicles and prostate.

It is found in the secreted. The protein resides in the extracellular space. Its activity is regulated as follows. Its inhibitory activity is greatly enhanced in the presence of glycosaminoglycans, heparin, thrombomodulin and phospholipids vesicles. Its function is as follows. Heparin-dependent serine protease inhibitor acting in body fluids and secretions. Inactivates serine proteases by binding irreversibly to their serine activation site. Involved in the regulation of intravascular and extravascular proteolytic activities. Plays hemostatic roles in the blood plasma. Acts as a procoagulant and pro-inflammatory factor by inhibiting the anticoagulant activated protein C factor as well as the generation of activated protein C factor by the thrombin/thrombomodulin complex. Acts as an anticoagulant factor by inhibiting blood coagulation factors like prothrombin, factor XI, factor Xa, plasma kallikrein and fibrinolytic enzymes such as tissue- and urinary-type plasminogen activators. In seminal plasma, inactivates several serine proteases implicated in the reproductive system. Inhibits the serpin acrosin; indirectly protects component of the male genital tract from being degraded by excessive released acrosin. Inhibits tissue- and urinary-type plasminogen activator, prostate-specific antigen and kallikrein activities; has a control on the sperm motility and fertilization. Inhibits the activated protein C-catalyzed degradation of SEMG1 and SEMG2; regulates the degradation of semenogelin during the process of transfer of spermatozoa from the male reproductive tract into the female tract. In urine, inhibits urinary-type plasminogen activator and kallikrein activities. Inactivates membrane-anchored serine proteases activities such as MPRSS7 and TMPRSS11E. Inhibits urinary-type plasminogen activator-dependent tumor cell invasion and metastasis. May also play a non-inhibitory role in seminal plasma and urine as a hydrophobic hormone carrier by its binding to retinoic acid. In Homo sapiens (Human), this protein is Plasma serine protease inhibitor (SERPINA5).